A 549-amino-acid polypeptide reads, in one-letter code: Hydroxylamine reductase (549 aa).

[4Fe-4S] cluster contacts are provided by Cys5, Cys8, Cys17, and Cys23. 8 residues coordinate hybrid [4Fe-2O-2S] cluster: His243, Glu267, Cys311, Cys403, Cys431, Cys456, Glu491, and Lys493. A Cysteine persulfide modification is found at Cys403.

It belongs to the HCP family. [4Fe-4S] cluster is required as a cofactor. Requires hybrid [4Fe-2O-2S] cluster as cofactor.

The protein resides in the cytoplasm. It catalyses the reaction A + NH4(+) + H2O = hydroxylamine + AH2 + H(+). Catalyzes the reduction of hydroxylamine to form NH(3) and H(2)O. This chain is Hydroxylamine reductase, found in Desulfitobacterium hafniense (strain DSM 10664 / DCB-2).